Here is an 855-residue protein sequence, read N- to C-terminus: Envelope glycoprotein gp160 (855 aa).

The signal sequence occupies residues 1 to 31 (MRAREIERNCPNLWKWGIMLLGILMICSAAD). The Extracellular portion of the chain corresponds to 32–683 (NLWVTVYYGV…ITQWLWYIKI (652 aa)). Residues C53 and C73 are joined by a disulfide bond. 15 N-linked (GlcNAc...) asparagine; by host glycosylation sites follow: N87, N129, N140, N145, N154, N158, N186, N189, N199, N236, N243, N264, N278, N291, and N297. Disulfide bonds link C118–C207, C125–C198, C130–C155, C220–C249, and C230–C241. The tract at residues 130–154 (CTDESDEWMGNVTGKNVTEDIRMKN) is V1. The tract at residues 155 to 198 (CSFNITTVVRDKTKQVHALFYRLDIVPIDNDNSTNSTNYRLINC) is V2. Residues 298-331 (CTRPYKNTRQSTPIGLGQALYTTRGRTKIIGQAH) are V3. Residues C298 and C332 are joined by a disulfide bond. N-linked (GlcNAc...) asparagine; by host glycans are attached at residues N333, N340, and N355. Residues 364–374 (SSGGDAEITTH) are CD4-binding loop. Disulfide bonds link C378-C444 and C385-C417. The V4 stretch occupies residues 385–417 (CNTSGLFNSTWNINNSEGANSTESDNKLITLQC). 9 N-linked (GlcNAc...) asparagine; by host glycosylation sites follow: N386, N392, N398, N404, N443, N447, N460, N461, and N464. V5 stretches follow at residues 459 to 470 (TNNSSNETFRPG) and 462 to 470 (SSNETFRPG). Residues 511 to 531 (AIGLGAMFLGFLGAAGSTMGA) form a fusion peptide region. The immunosuppression stretch occupies residues 573 to 591 (KQLQARILAVERYLKDQQL). Residues C597 and C603 are joined by a disulfide bond. N-linked (GlcNAc...) asparagine; by host glycans are attached at residues N610, N615, N624, N636, and N673. Residues 632–666 (REIDNYTGLIYRLIEESQTQQEKNEQELLELDKWA) adopt a coiled-coil conformation. Residues 661–682 (ELDKWASLWNWFNITQWLWYIK) are MPER; binding to GalCer. Residues 684-704 (FIMIVGGLIGLRIVFAVLSLV) traverse the membrane as a helical segment. The Cytoplasmic segment spans residues 705–855 (NRVRQGYSPL…IRQGLERLLL (151 aa)). Residues 711–714 (YSPL) carry the YXXL motif; contains endocytosis signal motif. A lipid anchor (S-palmitoyl cysteine; by host) is attached at C763. The short motif at 854–855 (LL) is the Di-leucine internalization motif element.

Belongs to the HIV-1 env protein family. As to quaternary structure, the mature envelope protein (Env) consists of a homotrimer of non-covalently associated gp120-gp41 heterodimers. The resulting complex protrudes from the virus surface as a spike. There seems to be as few as 10 spikes on the average virion. Interacts with host CD4, CCR5 and CXCR4. Gp120 also interacts with the C-type lectins CD209/DC-SIGN and CLEC4M/DC-SIGNR (collectively referred to as DC-SIGN(R)). Gp120 and gp41 interact with GalCer. Gp120 interacts with host ITGA4/ITGB7 complex; on CD4+ T-cells, this interaction results in rapid activation of integrin ITGAL/LFA-1, which facilitates efficient cell-to-cell spreading of HIV-1. Gp120 interacts with cell-associated heparan sulfate; this interaction increases virus infectivity on permissive cells and may be involved in infection of CD4- cells. In terms of assembly, the mature envelope protein (Env) consists of a homotrimer of non-covalently associated gp120-gp41 heterodimers. The resulting complex protrudes from the virus surface as a spike. There seems to be as few as 10 spikes on the average virion. Post-translationally, highly glycosylated by host. The high number of glycan on the protein is reffered to as 'glycan shield' because it contributes to hide protein sequence from adaptive immune system. In terms of processing, palmitoylation of the transmembrane protein and of Env polyprotein (prior to its proteolytic cleavage) is essential for their association with host cell membrane lipid rafts. Palmitoylation is therefore required for envelope trafficking to classical lipid rafts, but not for viral replication. Specific enzymatic cleavages in vivo yield mature proteins. Envelope glycoproteins are synthesized as an inactive precursor that is heavily N-glycosylated and processed likely by host cell furin in the Golgi to yield the mature SU and TM proteins. The cleavage site between SU and TM requires the minimal sequence [KR]-X-[KR]-R. About 2 of the 9 disulfide bonds of gp41 are reduced by P4HB/PDI, following binding to CD4 receptor.

It is found in the virion membrane. The protein resides in the host cell membrane. Its subcellular location is the host endosome membrane. In terms of biological role, oligomerizes in the host endoplasmic reticulum into predominantly trimers. In a second time, gp160 transits in the host Golgi, where glycosylation is completed. The precursor is then proteolytically cleaved in the trans-Golgi and thereby activated by cellular furin or furin-like proteases to produce gp120 and gp41. Attaches the virus to the host lymphoid cell by binding to the primary receptor CD4. This interaction induces a structural rearrangement creating a high affinity binding site for a chemokine coreceptor like CXCR4 and/or CCR5. Acts as a ligand for CD209/DC-SIGN and CLEC4M/DC-SIGNR, which are respectively found on dendritic cells (DCs), and on endothelial cells of liver sinusoids and lymph node sinuses. These interactions allow capture of viral particles at mucosal surfaces by these cells and subsequent transmission to permissive cells. HIV subverts the migration properties of dendritic cells to gain access to CD4+ T-cells in lymph nodes. Virus transmission to permissive T-cells occurs either in trans (without DCs infection, through viral capture and transmission), or in cis (following DCs productive infection, through the usual CD4-gp120 interaction), thereby inducing a robust infection. In trans infection, bound virions remain infectious over days and it is proposed that they are not degraded, but protected in non-lysosomal acidic organelles within the DCs close to the cell membrane thus contributing to the viral infectious potential during DCs' migration from the periphery to the lymphoid tissues. On arrival at lymphoid tissues, intact virions recycle back to DCs' cell surface allowing virus transmission to CD4+ T-cells. Its function is as follows. Acts as a class I viral fusion protein. Under the current model, the protein has at least 3 conformational states: pre-fusion native state, pre-hairpin intermediate state, and post-fusion hairpin state. During fusion of viral and target intracellular membranes, the coiled coil regions (heptad repeats) assume a trimer-of-hairpins structure, positioning the fusion peptide in close proximity to the C-terminal region of the ectodomain. The formation of this structure appears to drive apposition and subsequent fusion of viral and target cell membranes. Complete fusion occurs in host cell endosomes and is dynamin-dependent, however some lipid transfer might occur at the plasma membrane. The virus undergoes clathrin-dependent internalization long before endosomal fusion, thus minimizing the surface exposure of conserved viral epitopes during fusion and reducing the efficacy of inhibitors targeting these epitopes. Membranes fusion leads to delivery of the nucleocapsid into the cytoplasm. The sequence is that of Envelope glycoprotein gp160 from Homo sapiens (Human).